A 192-amino-acid chain; its full sequence is dTTP/UTP pyrophosphatase (192 aa).

The active-site Proton acceptor is aspartate 75.

The protein belongs to the Maf family. YhdE subfamily. The cofactor is a divalent metal cation.

The protein localises to the cytoplasm. It carries out the reaction dTTP + H2O = dTMP + diphosphate + H(+). The enzyme catalyses UTP + H2O = UMP + diphosphate + H(+). In terms of biological role, nucleoside triphosphate pyrophosphatase that hydrolyzes dTTP and UTP. May have a dual role in cell division arrest and in preventing the incorporation of modified nucleotides into cellular nucleic acids. The sequence is that of dTTP/UTP pyrophosphatase from Bdellovibrio bacteriovorus (strain ATCC 15356 / DSM 50701 / NCIMB 9529 / HD100).